Consider the following 151-residue polypeptide: MFRGIHQVSVDAKGRMSLPARLRDDLAQYDDDGVVVTIDPVSRCLLLYPLSEWELIQQKLDKLPTFQPQARRLQRLLVGHATDLEVDKAGRILLPAPLREFARLDKKLTILGQGKKLEIWSQEEWEAQREDYLSQDALEDLQTETMMDISL.

SpoVT-AbrB domains lie at 5–52 and 81–124; these read IHQV…PLSE and ATDL…SQEE.

It belongs to the MraZ family. In terms of assembly, forms oligomers.

The protein localises to the cytoplasm. The protein resides in the nucleoid. The polypeptide is Transcriptional regulator MraZ (Marinomonas sp. (strain MWYL1)).